The chain runs to 458 residues: MTDDMTKDNINQQTLQRGLKNRHIQLIAIGGAIGTGLFLGSGKSIHFAGPSILFAYMITGIICFLIMRSLGELLLSNLNYHSFVDFVQDYLGDMAAFITGWTYWFCWISIAMADLTAVGLYTQYWLPGVPQWVPGLIALIILLIMNLATVKLFGELEFWFALIKVIAILALIVIGLVMIFKGFSTSSGVSSFTNLWSHGGLFPNGMHGFILSFQMVVFAFVGIELVGLTAGETENPEKVIPKAINNIPVRVLLFYIGALLVIMSIYPWDIINPSESPFVQVFVAVGIVGAASIINFVVLTSAASACNSAVFSTSRMVYSLAKDHNAPESMAKLTQRKVPRNALFFSAIVILIGVTLNYIMPEGVFTLITSISTVCFIYIWGITVICHMKYRKTRPELAKTNKFKLPLYPFTNYLILAFLAFVLVVLALAQDTRVSLFVTPVWFILLIVIYKVRKAKHQ.

12 helical membrane-spanning segments follow: residues 26–46 (LIAIGGAIGTGLFLGSGKSIH), 47–67 (FAGPSILFAYMITGIICFLIM), 95–115 (AAFITGWTYWFCWISIAMADL), 125–145 (WLPGVPQWVPGLIALIILLIM), 160–180 (FALIKVIAILALIVIGLVMIF), 208–228 (GFILSFQMVVFAFVGIELVGL), 251–271 (VLLFYIGALLVIMSIYPWDII), 278–298 (FVQVFVAVGIVGAASIINFVV), 342–362 (ALFFSAIVILIGVTLNYIMPE), 365–385 (FTLITSISTVCFIYIWGITVI), 409–429 (PFTNYLILAFLAFVLVVLALA), and 432–452 (TRVSLFVTPVWFILLIVIYKV).

Belongs to the amino acid-polyamine-organocation (APC) superfamily.

It is found in the cell membrane. In terms of biological role, probable amino-acid or metabolite transport protein. This is an uncharacterized protein from Bacillus subtilis (strain 168).